The primary structure comprises 355 residues: MTRAERKKQHIEHALSTGQHAETGLKDVSFVHVGLPDLATSQIDTHTTIGGLTFGSPIFINAMTGGGGKSTYEINRSLSIAAKETNIPVAVGSQMAALKDKEERRTYEVVRKVNPNGIVFANLGSEATIKQAKEAVEMLEANMLQIHLNVIQEIVMPEGDRDFRGALERIAAIAESVGVPVVVKEVGFGMSKETAKKLFHAGVAAVDIGGFGGTNFSKIENLRRQKALHYFDQWGIPTAASLAEVHTSFPDQTVLASGGIQDALDVTKSIALGASAAGLAGFFLKSLTDGGEKGLIADMIDLQEDVKMMMTVLGAKTIEELRQTQVVISGDTSHWLKERGIDTTYYSVRTNKKKG.

6–7 lines the substrate pocket; sequence RK. FMN-binding positions include 62–64, S93, and N122; that span reads AMT. Q152 is a substrate binding site. E153 serves as a coordination point for Mg(2+). FMN-binding positions include K184, T214, 258–259, and 280–281; these read GG and AG.

It belongs to the IPP isomerase type 2 family. In terms of assembly, homooctamer. Dimer of tetramers. FMN is required as a cofactor. Requires NADPH as cofactor. Mg(2+) serves as cofactor.

The protein resides in the cytoplasm. The catalysed reaction is isopentenyl diphosphate = dimethylallyl diphosphate. Involved in the biosynthesis of isoprenoids. Catalyzes the 1,3-allylic rearrangement of the homoallylic substrate isopentenyl (IPP) to its allylic isomer, dimethylallyl diphosphate (DMAPP). The sequence is that of Isopentenyl-diphosphate delta-isomerase from Bacillus pumilus (strain SAFR-032).